The following is a 76-amino-acid chain: Exodeoxyribonuclease 7 small subunit (76 aa).

It belongs to the XseB family. Heterooligomer composed of large and small subunits.

Its subcellular location is the cytoplasm. It carries out the reaction Exonucleolytic cleavage in either 5'- to 3'- or 3'- to 5'-direction to yield nucleoside 5'-phosphates.. Bidirectionally degrades single-stranded DNA into large acid-insoluble oligonucleotides, which are then degraded further into small acid-soluble oligonucleotides. This Legionella pneumophila subsp. pneumophila (strain Philadelphia 1 / ATCC 33152 / DSM 7513) protein is Exodeoxyribonuclease 7 small subunit.